Reading from the N-terminus, the 200-residue chain is Imidazoleglycerol-phosphate dehydratase (200 aa).

The protein belongs to the imidazoleglycerol-phosphate dehydratase family.

The protein localises to the cytoplasm. The enzyme catalyses D-erythro-1-(imidazol-4-yl)glycerol 3-phosphate = 3-(imidazol-4-yl)-2-oxopropyl phosphate + H2O. The protein operates within amino-acid biosynthesis; L-histidine biosynthesis; L-histidine from 5-phospho-alpha-D-ribose 1-diphosphate: step 6/9. This is Imidazoleglycerol-phosphate dehydratase from Chlorobium luteolum (strain DSM 273 / BCRC 81028 / 2530) (Pelodictyon luteolum).